Reading from the N-terminus, the 98-residue chain is NADH-ubiquinone oxidoreductase chain 4L (98 aa).

The next 3 membrane-spanning stretches (helical) occupy residues Met1 to Met21, Ala29 to Leu49, and Ile61 to Ile81.

It belongs to the complex I subunit 4L family. In terms of assembly, core subunit of respiratory chain NADH dehydrogenase (Complex I) which is composed of 45 different subunits.

Its subcellular location is the mitochondrion inner membrane. It carries out the reaction a ubiquinone + NADH + 5 H(+)(in) = a ubiquinol + NAD(+) + 4 H(+)(out). Core subunit of the mitochondrial membrane respiratory chain NADH dehydrogenase (Complex I) which catalyzes electron transfer from NADH through the respiratory chain, using ubiquinone as an electron acceptor. Part of the enzyme membrane arm which is embedded in the lipid bilayer and involved in proton translocation. In Berardius bairdii (Baird's beaked whale), this protein is NADH-ubiquinone oxidoreductase chain 4L (MT-ND4L).